Reading from the N-terminus, the 199-residue chain is uncharacterized protein (199 aa).

Residues 71–104 (RANATNKLTVIAEQIQHLQEQARKVLEDARRDAD) adopt a coiled-coil conformation.

This is an uncharacterized protein from Mus musculus (Mouse).